The following is an 88-amino-acid chain: Beta-insect excitatory toxin 1 (88 aa).

Positions 1–18 (MKFLLLFLVVLPIMGVFG) are cleaved as a signal peptide. Residues 20-83 (KNGYAVDSSG…ISDTRKSYCD (64 aa)) enclose the LCN-type CS-alpha/beta domain. 4 disulfides stabilise this stretch: Cys34–Cys55, Cys40–Cys60, Cys44–Cys62, and Cys56–Cys82.

Belongs to the long (4 C-C) scorpion toxin superfamily. Sodium channel inhibitor family. Beta subfamily. Expressed by the venom gland.

It is found in the secreted. Its function is as follows. Excitatory insect beta-toxins induce a spastic paralysis. They bind voltage-independently at site-4 of sodium channels (Nav) and shift the voltage of activation toward more negative potentials thereby affecting sodium channel activation and promoting spontaneous and repetitive firing. This toxin is active only on insects. In Androctonus australis (Sahara scorpion), this protein is Beta-insect excitatory toxin 1.